The chain runs to 227 residues: Floral homeotic protein DEFICIENS (227 aa).

The 55-residue stretch at 3-57 (RGKIQIKRIENQTNRQVTYSKRRNGLFKKAHELSVLCDAKVSIIMISSTQKLHEY) folds into the MADS-box domain. The region spanning 84 to 174 (YEKMQEHLKK…VLEFDARRED (91 aa)) is the K-box domain.

The protein localises to the nucleus. Transcription factor involved in the genetic control of flower development. Acts in conjunction with GLOBOSA (glo). This chain is Floral homeotic protein DEFICIENS (DEFA), found in Antirrhinum majus (Garden snapdragon).